Reading from the N-terminus, the 793-residue chain is MAQDQNVPLVATSPPRKRRRPPKSCDPCRRRKVRCDRKFPCGQCERARTALQCNYAPIVTASSPSGGDISHLAAPSVREGDSPPSEPADPQRPSRPSAHSSHLLPPEQHQSQNKIIQNLQRRIRRLEDQLPYPATSRTTTGPDSDVSQAQALRHLHDRVLLTEEQWSDFSQPNNLVNGWAIPAIQPRLRVTPDKTKVFGPSHWLHTAEKFQVLGKFDAKEVEPSLQGVDSRSEVAGILKDCRHLRQTMKAQESVRLNHPVPDILSTLPTQEVCDSLVDAYLRTFELIYRIVHIPTFWEDYRRFWTQPQSTSTHFLMQLVLILALGTIFYSDRSKRVNLRRLAHTWIYAAQWWLVGPSEKSTVNLEGLQVGCLLLLARQTNILPTTSWLSVGSVLRMAMVMGLHRAPDLFPALSEYQSEMRVRLWVTVLELTLLSSLDASMPLPFSLQDIDCMAPSNLDDEQFGPKTERLPRPQPSERLTESSIQILLHKSLPVRVEAVRLLNNQHRQELSYETALRLGTELRSACRDVAALFDTARNQSRHVTPSSKMAPFHLRFIDTYLRRYILFLHRPFMIQARKDPRFYLSRKVCLDSCVVIASYADHLRLPSDNLDDLSHLAIVGRGSFKGALSFDVIISLGLEIITQLEEEASTRPSGSSPPFVADHLDKMAKANRVPLIRSLEHIQEQLLQIIALGNPSLKRYNFLCAILSQIRAMESGQPIQPAIYATIKESLLKCYTLLKASHAASSPQESVESLTTGPDSLPDFDVDALDPALGLEIPSLLFFPGLMDMSGTEW.

Disordered stretches follow at residues 1-29 (MAQDQNVPLVATSPPRKRRRPPKSCDPCR), 60-113 (TASS…QSQN), and 457-476 (LDDEQFGPKTERLPRPQPSE). Residues 25-53 (CDPCRRRKVRCDRKFPCGQCERARTALQC) constitute a DNA-binding region (zn(2)-C6 fungal-type).

Its subcellular location is the nucleus. In terms of biological role, transcription factor; part of the gene cluster that mediates the biosynthesis of oxopyrrolidines, polyketide-amino acid hybrid compounds with feature structures of tetramic acid. The sequence is that of Transcription factor opdR from Penicillium oxalicum (strain 114-2 / CGMCC 5302) (Penicillium decumbens).